The primary structure comprises 138 residues: Small ribosomal subunit protein uS9 (138 aa).

Basic and acidic residues predominate over residues 100–118; sequence PENRPPLKTEGYLTRDPRA. The tract at residues 100-138 is disordered; that stretch reads PENRPPLKTEGYLTRDPRAKERKKYGLHKARKAPQYSKR. Basic residues predominate over residues 119-138; it reads KERKKYGLHKARKAPQYSKR.

Belongs to the universal ribosomal protein uS9 family.

The protein is Small ribosomal subunit protein uS9 of Trichormus variabilis (strain ATCC 29413 / PCC 7937) (Anabaena variabilis).